We begin with the raw amino-acid sequence, 260 residues long: NAD-dependent protein deacetylase (260 aa).

Residues 9-260 form the Deacetylase sirtuin-type domain; sequence DDIDGETLDA…QVLPAIVERL (252 aa). Alanine 35, threonine 39, phenylalanine 46, arginine 47, glutamine 114, isoleucine 116, aspartate 117, and histidine 132 together coordinate NAD(+). A nicotinamide-binding site is contributed by phenylalanine 46. Residues isoleucine 116 and aspartate 117 each coordinate nicotinamide. The Proton acceptor role is filled by histidine 132. Zn(2+) is bound by residues cysteine 140, cysteine 143, cysteine 166, and cysteine 168. 5 residues coordinate NAD(+): serine 206, serine 207, asparagine 231, aspartate 248, and valine 249.

The protein belongs to the sirtuin family. Class U subfamily. Requires Zn(2+) as cofactor.

The protein resides in the cytoplasm. The enzyme catalyses N(6)-acetyl-L-lysyl-[protein] + NAD(+) + H2O = 2''-O-acetyl-ADP-D-ribose + nicotinamide + L-lysyl-[protein]. NAD-dependent protein deacetylase which modulates the activities of several enzymes which are inactive in their acetylated form. Deacetylates the N-terminal lysine residue of Alba, the major archaeal chromatin protein and that, in turn, increases Alba's DNA binding affinity, thereby repressing transcription. This Haloarcula marismortui (strain ATCC 43049 / DSM 3752 / JCM 8966 / VKM B-1809) (Halobacterium marismortui) protein is NAD-dependent protein deacetylase.